Consider the following 263-residue polypeptide: 3-deoxy-manno-octulosonate cytidylyltransferase (263 aa).

The protein belongs to the KdsB family.

The protein localises to the cytoplasm. The catalysed reaction is 3-deoxy-alpha-D-manno-oct-2-ulosonate + CTP = CMP-3-deoxy-beta-D-manno-octulosonate + diphosphate. It functions in the pathway nucleotide-sugar biosynthesis; CMP-3-deoxy-D-manno-octulosonate biosynthesis; CMP-3-deoxy-D-manno-octulosonate from 3-deoxy-D-manno-octulosonate and CTP: step 1/1. It participates in bacterial outer membrane biogenesis; lipopolysaccharide biosynthesis. Activates KDO (a required 8-carbon sugar) for incorporation into bacterial lipopolysaccharide in Gram-negative bacteria. This Burkholderia cenocepacia (strain HI2424) protein is 3-deoxy-manno-octulosonate cytidylyltransferase.